A 644-amino-acid polypeptide reads, in one-letter code: Chaperone protein DnaK (644 aa).

2 disordered regions span residues 490–533 and 570–644; these read QEEA…ELDD and EELQ…EDDA. The span at 492–513 shows a compositional bias: basic and acidic residues; that stretch reads EAEKHKEEDEARRERIEARNEA. A compositionally biased stretch (acidic residues) spans 523–533; the sequence is LLEENEEELDD. Over residues 588–622 the composition is skewed to gly residues; sequence GPGGAGGAAGAGPGGMGGMGGAAGPGGAGGAGPGG. The segment covering 624–644 has biased composition (acidic residues); that stretch reads DADDEEYVDADFEDVDDEDDA.

The protein belongs to the heat shock protein 70 family.

In terms of biological role, acts as a chaperone. The polypeptide is Chaperone protein DnaK (Halorubrum lacusprofundi (strain ATCC 49239 / DSM 5036 / JCM 8891 / ACAM 34)).